The primary structure comprises 417 residues: UDP-N-acetylglucosamine 1-carboxyvinyltransferase (417 aa).

22 to 23 (KN) lines the phosphoenolpyruvate pocket. Arginine 93 contributes to the UDP-N-acetyl-alpha-D-glucosamine binding site. Cysteine 117 functions as the Proton donor in the catalytic mechanism. Position 117 is a 2-(S-cysteinyl)pyruvic acid O-phosphothioketal (cysteine 117). Residues 122 to 126 (RPVDQ), aspartate 304, and isoleucine 326 each bind UDP-N-acetyl-alpha-D-glucosamine.

This sequence belongs to the EPSP synthase family. MurA subfamily.

It is found in the cytoplasm. It carries out the reaction phosphoenolpyruvate + UDP-N-acetyl-alpha-D-glucosamine = UDP-N-acetyl-3-O-(1-carboxyvinyl)-alpha-D-glucosamine + phosphate. It functions in the pathway cell wall biogenesis; peptidoglycan biosynthesis. Cell wall formation. Adds enolpyruvyl to UDP-N-acetylglucosamine. The sequence is that of UDP-N-acetylglucosamine 1-carboxyvinyltransferase from Neisseria meningitidis serogroup B (strain ATCC BAA-335 / MC58).